A 507-amino-acid polypeptide reads, in one-letter code: ATP synthase subunit alpha, chloroplastic (507 aa).

Residue 170 to 177 (GDRQTGKT) coordinates ATP.

The protein belongs to the ATPase alpha/beta chains family. F-type ATPases have 2 components, CF(1) - the catalytic core - and CF(0) - the membrane proton channel. CF(1) has five subunits: alpha(3), beta(3), gamma(1), delta(1), epsilon(1). CF(0) has four main subunits: a, b, b' and c.

The protein localises to the plastid. It is found in the chloroplast thylakoid membrane. It catalyses the reaction ATP + H2O + 4 H(+)(in) = ADP + phosphate + 5 H(+)(out). Its function is as follows. Produces ATP from ADP in the presence of a proton gradient across the membrane. The alpha chain is a regulatory subunit. The protein is ATP synthase subunit alpha, chloroplastic of Phalaenopsis aphrodite subsp. formosana (Moth orchid).